The sequence spans 361 residues: Ribosomal RNA large subunit methyltransferase M (361 aa).

S-adenosyl-L-methionine contacts are provided by residues Ser-187, 220–223, Asp-239, Asp-259, and Asp-276; that span reads CPGG. Lys-305 serves as the catalytic Proton acceptor.

The protein belongs to the class I-like SAM-binding methyltransferase superfamily. RNA methyltransferase RlmE family. RlmM subfamily. In terms of assembly, monomer.

The protein resides in the cytoplasm. The enzyme catalyses cytidine(2498) in 23S rRNA + S-adenosyl-L-methionine = 2'-O-methylcytidine(2498) in 23S rRNA + S-adenosyl-L-homocysteine + H(+). In terms of biological role, catalyzes the 2'-O-methylation at nucleotide C2498 in 23S rRNA. The sequence is that of Ribosomal RNA large subunit methyltransferase M from Shewanella sp. (strain ANA-3).